The following is a 152-amino-acid chain: UPF0178 protein YaiI (152 aa).

This sequence belongs to the UPF0178 family.

The sequence is that of UPF0178 protein YaiI from Shigella flexneri.